The chain runs to 1373 residues: DNA-directed RNA polymerase subunit beta (1373 aa).

It belongs to the RNA polymerase beta chain family. In terms of assembly, the RNAP catalytic core consists of 2 alpha, 1 beta, 1 beta' and 1 omega subunit. When a sigma factor is associated with the core the holoenzyme is formed, which can initiate transcription.

It carries out the reaction RNA(n) + a ribonucleoside 5'-triphosphate = RNA(n+1) + diphosphate. DNA-dependent RNA polymerase catalyzes the transcription of DNA into RNA using the four ribonucleoside triphosphates as substrates. The protein is DNA-directed RNA polymerase subunit beta of Rickettsia rickettsii (strain Iowa).